We begin with the raw amino-acid sequence, 136 residues long: Small ribosomal subunit protein uS9 (136 aa).

Residues 111–136 (DARRTEPHKPSRSTKGPRAKRQKSYR) form a disordered region. The segment covering 120–136 (PSRSTKGPRAKRQKSYR) has biased composition (basic residues).

It belongs to the universal ribosomal protein uS9 family.

This Methanocaldococcus jannaschii (strain ATCC 43067 / DSM 2661 / JAL-1 / JCM 10045 / NBRC 100440) (Methanococcus jannaschii) protein is Small ribosomal subunit protein uS9 (rps9).